Reading from the N-terminus, the 165-residue chain is Cyclic pyranopterin monophosphate synthase (165 aa).

Substrate contacts are provided by residues 83 to 85 (FCH) and 120 to 121 (ME). Residue Asp-135 is part of the active site.

The protein belongs to the MoaC family. In terms of assembly, homohexamer; trimer of dimers.

It carries out the reaction (8S)-3',8-cyclo-7,8-dihydroguanosine 5'-triphosphate = cyclic pyranopterin phosphate + diphosphate. Its pathway is cofactor biosynthesis; molybdopterin biosynthesis. In terms of biological role, catalyzes the conversion of (8S)-3',8-cyclo-7,8-dihydroguanosine 5'-triphosphate to cyclic pyranopterin monophosphate (cPMP). The sequence is that of Cyclic pyranopterin monophosphate synthase from Xanthomonas oryzae pv. oryzae (strain MAFF 311018).